The chain runs to 453 residues: Methionine aminopeptidase 2-1 (453 aa).

Positions 1–12 (MGSKTPDGHRQS) are enriched in basic and acidic residues. Positions 1–101 (MGSKTPDGHR…TTPPRVPLST (101 aa)) are disordered. Positions 46–57 (GEDDDDDDENEE) are enriched in acidic residues. Basic residues predominate over residues 67–82 (KKKKRKKSKKKNKKSK). Residue His210 coordinates substrate. A divalent metal cation-binding residues include Asp231, Asp242, and His306. His314 provides a ligand contact to substrate. 2 residues coordinate a divalent metal cation: Glu339 and Glu434.

The protein belongs to the peptidase M24A family. Methionine aminopeptidase eukaryotic type 2 subfamily. Requires Co(2+) as cofactor. It depends on Zn(2+) as a cofactor. Mn(2+) serves as cofactor. Fe(2+) is required as a cofactor.

The protein resides in the cytoplasm. The enzyme catalyses Release of N-terminal amino acids, preferentially methionine, from peptides and arylamides.. Cotranslationally removes the N-terminal methionine from nascent proteins. The N-terminal methionine is often cleaved when the second residue in the primary sequence is small and uncharged (Met-Ala-, Cys, Gly, Pro, Ser, Thr, or Val). The sequence is that of Methionine aminopeptidase 2-1 from Aspergillus terreus (strain NIH 2624 / FGSC A1156).